We begin with the raw amino-acid sequence, 896 residues long: DNA mismatch repair protein MutS (896 aa).

An ATP-binding site is contributed by 599–606 (GPNMAGKS).

It belongs to the DNA mismatch repair MutS family.

This protein is involved in the repair of mismatches in DNA. It is possible that it carries out the mismatch recognition step. This protein has a weak ATPase activity. This is DNA mismatch repair protein MutS from Geobacillus kaustophilus (strain HTA426).